Consider the following 213-residue polypeptide: MLTVALPKGALLKDSVARFAAAGLDFSAITAADNRQLMLPSACGRARALLVRNGDVPVYVAYGQAQLGVVGYDVLKEQQRTVAQLLDLGFGGCRMAVAVKESSPYRRASDLPAHCRVASKFTSSAQEFFNQLDLPVELIHLTGSVELGPITGISEAIVDLVATGRTLRDNGLIAIEDLFHSTARLIGNPLALRLDTGELNELVQAMEGQGVTP.

This sequence belongs to the ATP phosphoribosyltransferase family. Short subfamily. In terms of assembly, heteromultimer composed of HisG and HisZ subunits.

The protein resides in the cytoplasm. It carries out the reaction 1-(5-phospho-beta-D-ribosyl)-ATP + diphosphate = 5-phospho-alpha-D-ribose 1-diphosphate + ATP. It functions in the pathway amino-acid biosynthesis; L-histidine biosynthesis; L-histidine from 5-phospho-alpha-D-ribose 1-diphosphate: step 1/9. Functionally, catalyzes the condensation of ATP and 5-phosphoribose 1-diphosphate to form N'-(5'-phosphoribosyl)-ATP (PR-ATP). Has a crucial role in the pathway because the rate of histidine biosynthesis seems to be controlled primarily by regulation of HisG enzymatic activity. The protein is ATP phosphoribosyltransferase of Synechococcus sp. (strain RCC307).